The sequence spans 92 residues: Small ribosomal subunit protein bS18 (92 aa).

A disordered region spans residues 1-28 (MTQQGNSGERKPRGKGPKRPRKPKVDPF). A compositionally biased stretch (basic residues) spans 12–22 (PRGKGPKRPRK).

This sequence belongs to the bacterial ribosomal protein bS18 family. In terms of assembly, part of the 30S ribosomal subunit. Forms a tight heterodimer with protein bS6.

Its function is as follows. Binds as a heterodimer with protein bS6 to the central domain of the 16S rRNA, where it helps stabilize the platform of the 30S subunit. The sequence is that of Small ribosomal subunit protein bS18 from Deinococcus radiodurans (strain ATCC 13939 / DSM 20539 / JCM 16871 / CCUG 27074 / LMG 4051 / NBRC 15346 / NCIMB 9279 / VKM B-1422 / R1).